Reading from the N-terminus, the 158-residue chain is S-ribosylhomocysteine lyase (158 aa).

The Fe cation site is built by histidine 56, histidine 60, and cysteine 125.

This sequence belongs to the LuxS family. Homodimer. Requires Fe cation as cofactor.

The catalysed reaction is S-(5-deoxy-D-ribos-5-yl)-L-homocysteine = (S)-4,5-dihydroxypentane-2,3-dione + L-homocysteine. In terms of biological role, involved in the synthesis of autoinducer 2 (AI-2) which is secreted by bacteria and is used to communicate both the cell density and the metabolic potential of the environment. The regulation of gene expression in response to changes in cell density is called quorum sensing. Catalyzes the transformation of S-ribosylhomocysteine (RHC) to homocysteine (HC) and 4,5-dihydroxy-2,3-pentadione (DPD). This chain is S-ribosylhomocysteine lyase, found in Leuconostoc mesenteroides subsp. mesenteroides (strain ATCC 8293 / DSM 20343 / BCRC 11652 / CCM 1803 / JCM 6124 / NCDO 523 / NBRC 100496 / NCIMB 8023 / NCTC 12954 / NRRL B-1118 / 37Y).